Here is a 514-residue protein sequence, read N- to C-terminus: Peptide chain release factor 3 (514 aa).

The tr-type G domain maps to 8-268 (KKRRTFAIIS…IFLKFAPEPH (261 aa)). Residues 17-24 (SHPDAGKT), 85-89 (DTPGH), and 139-142 (NKLD) contribute to the GTP site.

The protein belongs to the TRAFAC class translation factor GTPase superfamily. Classic translation factor GTPase family. PrfC subfamily.

The protein resides in the cytoplasm. Increases the formation of ribosomal termination complexes and stimulates activities of RF-1 and RF-2. It binds guanine nucleotides and has strong preference for UGA stop codons. It may interact directly with the ribosome. The stimulation of RF-1 and RF-2 is significantly reduced by GTP and GDP, but not by GMP. The chain is Peptide chain release factor 3 from Streptococcus pneumoniae (strain P1031).